A 281-amino-acid chain; its full sequence is 2,3,4,5-tetrahydropyridine-2,6-dicarboxylate N-succinyltransferase (281 aa).

Substrate-binding residues include arginine 108 and aspartate 145.

Belongs to the transferase hexapeptide repeat family. As to quaternary structure, homotrimer.

Its subcellular location is the cytoplasm. It carries out the reaction (S)-2,3,4,5-tetrahydrodipicolinate + succinyl-CoA + H2O = (S)-2-succinylamino-6-oxoheptanedioate + CoA. Its pathway is amino-acid biosynthesis; L-lysine biosynthesis via DAP pathway; LL-2,6-diaminopimelate from (S)-tetrahydrodipicolinate (succinylase route): step 1/3. In Methylobacterium nodulans (strain LMG 21967 / CNCM I-2342 / ORS 2060), this protein is 2,3,4,5-tetrahydropyridine-2,6-dicarboxylate N-succinyltransferase.